Reading from the N-terminus, the 641-residue chain is Tetracycline resistance protein TetQ (641 aa).

The tr-type G domain maps to 1–244 (MNIINLGILA…AITSFILPPA (244 aa)). GTP contacts are provided by residues 10 to 17 (AHIDAGKT), 74 to 78 (DTPGH), and 128 to 131 (NKID).

It belongs to the TRAFAC class translation factor GTPase superfamily. Classic translation factor GTPase family. TetM/TetO subfamily.

Abolishes the inhibitory effect of tetracyclin on protein synthesis by a non-covalent modification of the ribosomes. The polypeptide is Tetracycline resistance protein TetQ (tetQ) (Bacteroides thetaiotaomicron).